Here is a 23-residue protein sequence, read N- to C-terminus: Mu-conotoxin-like SxIIIB (23 aa).

A Pyrrolidone carboxylic acid modification is found at Gln-1. 3 disulfides stabilise this stretch: Cys-3/Cys-16, Cys-4/Cys-21, and Cys-11/Cys-22. Ala-23 is subject to Alanine amide.

The protein belongs to the conotoxin M superfamily. Expressed by the venom duct.

The protein resides in the secreted. Mu-conotoxins block voltage-gated sodium channels (Nav). This Conus striolatus (Cone snail) protein is Mu-conotoxin-like SxIIIB.